Here is a 390-residue protein sequence, read N- to C-terminus: MTKNSNHDENEFISFEPNQNTKIRFEDADEDEVAEGSGVAGEETPQDESMFDAGESADTAEVTDDTTSADYYFDSYSHFGIHEEMLKDVVRTKTYQNVIYQNKFLIKDKIVLDVGAGTGILSLFCAKAGAAHVYAVECSQMADMAKEIVKANGFSDVITVLKGKIEEIELPTPKVDVIISEWMGYFLLFENMLDSVLYARDKWLVEGGVVLPDKASLHLTAIEDSEYKEDKIEFWNSVYGFDMSCIKKKAMMEPLVDTVDQNQIVTDSRLLKTMDISKMSSGDASFTAPFKLVAQRNDYIHALVAYFDVSFTMCHKLLGFSTGPKSRATHWKQTVLYLEDVLTICEGETITGTMSVSPNKKNPRDIDIKLSYSLNGQHCKISRTQHYKMR.

Over residues 1–10 (MTKNSNHDEN) the composition is skewed to basic and acidic residues. A disordered region spans residues 1–59 (MTKNSNHDENEFISFEPNQNTKIRFEDADEDEVAEGSGVAGEETPQDESMFDAGESADT). The 322-residue stretch at 69 to 390 (ADYYFDSYSH…ISRTQHYKMR (322 aa)) folds into the SAM-dependent MTase PRMT-type domain. Catalysis depends on residues Glu181 and Glu190.

Belongs to the class I-like SAM-binding methyltransferase superfamily. Protein arginine N-methyltransferase family. In terms of assembly, interacts with PRMT12, MBD7 and FIB2.

The protein resides in the nucleus. It localises to the cytoplasm. It catalyses the reaction L-arginyl-[protein] + 2 S-adenosyl-L-methionine = N(omega),N(omega)-dimethyl-L-arginyl-[protein] + 2 S-adenosyl-L-homocysteine + 2 H(+). Methylates (mono and asymmetric dimethylation) the guanidino nitrogens of arginyl residues present in a glycine and arginine-rich domain. Type I arginine methyltransferase active on both histones and non-histone proteins. Required for leaves and flowers development. Mediates the methylation of MBD7 and MED36A. In Arabidopsis thaliana (Mouse-ear cress), this protein is Protein arginine N-methyltransferase 1.1 (PRMT11).